The sequence spans 36 residues: Insecticidal toxin LaIT1 (36 aa).

Intrachain disulfides connect Cys11–Cys23 and Cys17–Cys29.

In terms of tissue distribution, expressed by the venom gland.

Its subcellular location is the secreted. Its function is as follows. Affects the activity of both ryanodine-sensitive calcium-release channels RyR1 and RyR2 with high potency. At lower concentrations the toxin increases full openings of the RyRs, and at higher concentrations it inhibits full openings and induce openings to subconductance levels and reduces the number of full conductance openings. The different actions may be attributed to the toxins binding at different sites on the RyRs, with binding at a high-affinity site mediating the increase in full openings and the induction of subconductance states evoked upon binding to a lower-affinity site. Shows insect lethality against crickets and common cutworms (only shows paralysis against cockroaches), but no toxicity is observed in mice. The polypeptide is Insecticidal toxin LaIT1 (Liocheles australasiae (Dwarf wood scorpion)).